We begin with the raw amino-acid sequence, 460 residues long: Squalene synthase (460 aa).

Residues 425 to 445 form a helical membrane-spanning segment; sequence ISILFVFFIILVCLAVIFYVF.

Belongs to the phytoene/squalene synthase family. As to quaternary structure, interacts with pof14. Mg(2+) serves as cofactor.

The protein resides in the endoplasmic reticulum membrane. It catalyses the reaction 2 (2E,6E)-farnesyl diphosphate + NADPH + H(+) = squalene + 2 diphosphate + NADP(+). The catalysed reaction is 2 (2E,6E)-farnesyl diphosphate + NADH + H(+) = squalene + 2 diphosphate + NAD(+). It functions in the pathway terpene metabolism; lanosterol biosynthesis; lanosterol from farnesyl diphosphate: step 1/3. It participates in steroid metabolism; ergosterol biosynthesis. Squalene synthase; part of the third module of ergosterol biosynthesis pathway that includes by the late steps of the pathway. Erg9 produces squalene from 2 farnesyl pyrophosphate moieties. The third module or late pathway involves the ergosterol synthesis itself through consecutive reactions that mainly occur in the endoplasmic reticulum (ER) membrane. Firstly, the squalene synthase erg9 catalyzes the condensation of 2 farnesyl pyrophosphate moieties to form squalene, which is the precursor of all steroids. Secondly, squalene is converted into lanosterol by the consecutive action of the squalene epoxidase erg1 and the lanosterol synthase erg7. The lanosterol 14-alpha-demethylase erg11/cyp1 catalyzes C14-demethylation of lanosterol to produce 4,4'-dimethyl cholesta-8,14,24-triene-3-beta-ol. In the next steps, a complex process involving various demethylation, reduction and desaturation reactions catalyzed by the C-14 reductase erg24 and the C-4 demethylation complex erg25-erg26-erg27 leads to the production of zymosterol. Erg28 likely functions in the C-4 demethylation complex reaction by tethering erg26 and Erg27 to the endoplasmic reticulum or to facilitate interaction between these proteins. Then, the sterol 24-C-methyltransferase erg6 catalyzes the methyl transfer from S-adenosyl-methionine to the C-24 of zymosterol to form fecosterol. The C-8 sterol isomerase erg2 catalyzes the reaction which results in unsaturation at C-7 in the B ring of sterols and thus converts fecosterol to episterol. The sterol-C5-desaturases erg31 and erg32 then catalyze the introduction of a C-5 double bond in the B ring to produce 5-dehydroepisterol. The C-22 sterol desaturase erg5 further converts 5-dehydroepisterol into ergosta-5,7,22,24(28)-tetraen-3beta-ol by forming the C-22(23) double bond in the sterol side chain. Finally, ergosta-5,7,22,24(28)-tetraen-3beta-ol is substrate of the C-24(28) sterol reductase erg4 to produce ergosterol. In the genus Schizosaccharomyces, a second route exists between lanosterol and fecosterol, via the methylation of lanosterol to eburicol by erg6, followed by C14-demethylation by erg11/cyp1 and C4-demethylation by the demethylation complex erg25-erg26-erg27. In Schizosaccharomyces pombe (strain 972 / ATCC 24843) (Fission yeast), this protein is Squalene synthase.